The sequence spans 339 residues: Quinolinate synthase (339 aa).

Residues His63 and Ser81 each contribute to the iminosuccinate site. Residue Cys126 coordinates [4Fe-4S] cluster. Iminosuccinate-binding positions include Tyr152–Asn154 and Ser169. Cys211 serves as a coordination point for [4Fe-4S] cluster. Iminosuccinate-binding positions include His237–Glu239 and Thr254. Cys297 contributes to the [4Fe-4S] cluster binding site.

This sequence belongs to the quinolinate synthase family. Type 2 subfamily. The cofactor is [4Fe-4S] cluster.

The protein resides in the cytoplasm. It carries out the reaction iminosuccinate + dihydroxyacetone phosphate = quinolinate + phosphate + 2 H2O + H(+). It participates in cofactor biosynthesis; NAD(+) biosynthesis; quinolinate from iminoaspartate: step 1/1. Its function is as follows. Catalyzes the condensation of iminoaspartate with dihydroxyacetone phosphate to form quinolinate. This Xylella fastidiosa (strain 9a5c) protein is Quinolinate synthase.